Reading from the N-terminus, the 288-residue chain is Programmed cell death protein 1 (288 aa).

The signal sequence occupies residues 1–24; sequence MWVRQVPWSFTWAVLQLSWQSGWL. Topologically, residues 25–169 are extracellular; the sequence is LEVPNGPWRS…PKPEGRFQGM (145 aa). An Ig-like V-type domain is found at 31–139; sequence PWRSLTFYPA…PKAKIEESPG (109 aa). Asparagine 49, asparagine 58, asparagine 74, and asparagine 116 each carry an N-linked (GlcNAc...) asparagine glycan. An intrachain disulfide couples cysteine 54 to cysteine 123. An interaction with CD274/PDCD1L1 region spans residues 70-77; that stretch reads LSPSNQTE. A helical membrane pass occupies residues 170 to 190; sequence VIGIMSALVGIPVLLLLAWAL. Over 191 to 288 the chain is Cytoplasmic; that stretch reads AVFCSTSMSE…HEDGHCSWPL (98 aa). Positions 223–228 match the ITIM motif motif; sequence VAYEEL. Position 225 is a phosphotyrosine (tyrosine 225). Residue lysine 235 forms a Glycyl lysine isopeptide (Lys-Gly) (interchain with G-Cter in ubiquitin) linkage. Residue threonine 236 is modified to Phosphothreonine; by MAPK3. The short motif at 247-251 is the ITSM motif element; the sequence is EYATI. The residue at position 248 (tyrosine 248) is a Phosphotyrosine. A disordered region spans residues 263 to 288; that stretch reads GRRGSADGLQGPRPPRHEDGHCSWPL. A compositionally biased stretch (basic and acidic residues) spans 277–288; sequence PRHEDGHCSWPL.

As to quaternary structure, monomer. Interacts with CD274/PDCD1L1. Interacts with CD273/PDCD1LG2. Interacts with FBXO38; leading to ubiquitination and degradation by the proteasome. In terms of processing, ubiquitinated at Lys-235 by the SCF(FBXO38) complex, leading to its proteasomal degradation. Ubiquitinated via 'Lys-48'-linked polyubiquitin chains. Deubiquitinated and thus stabilized by USP5. Post-translationally, tyrosine phosphorylated at Tyr-225 (within ITIM motif) and Tyr-248 (ITSM motif) upon ligand binding. Phosphorylation at Tyr-248 promotes the recruitment of the protein tyrosine phosphatase PTPN11/SHP-2 that mediates dephosphorylation of key TCR proximal signaling molecules, such as ZAP70, PRKCQ/PKCtheta and CD247/CD3zeta. Phosphorylation at Thr-236 promotes the recruitment of the deubiquitinase USP5. As to expression, thymus-specific.

It is found in the cell membrane. Functionally, inhibitory receptor on antigen activated T-cells that plays a critical role in induction and maintenance of immune tolerance to self. Delivers inhibitory signals upon binding to ligands, such as CD274/PDCD1L1 and CD273/PDCD1LG2. Following T-cell receptor (TCR) engagement, PDCD1 associates with CD3-TCR in the immunological synapse and directly inhibits T-cell activation. Suppresses T-cell activation through the recruitment of PTPN11/SHP-2: following ligand-binding, PDCD1 is phosphorylated within the ITSM motif, leading to the recruitment of the protein tyrosine phosphatase PTPN11/SHP-2 that mediates dephosphorylation of key TCR proximal signaling molecules, such as ZAP70, PRKCQ/PKCtheta and CD247/CD3zeta. The PDCD1-mediated inhibitory pathway is exploited by tumors to attenuate anti-tumor immunity and facilitate tumor survival. The protein is Programmed cell death protein 1 of Mus musculus (Mouse).